Here is a 639-residue protein sequence, read N- to C-terminus: MATLSSPTIITTTSILLNNPFLPKTPQLSAHHHRGVRSVNGKVSCQTKNNNGNDENNQFQLIQNPNTNTPYLLDRRNILLGLGGMYAALGSEGANYYNTLAAPILPDVEKCTLSDALWDGSVGDHCCPPPFDLNITKDFEFKNYHNHVKKVRRPAHKAYEDQEWLNDYKRAIAIMKSLPMSDPRSHMQQARVHCAYCDGSYPVLGHNDTRLEVHASWLFPSFHRWYLYFYERILGKLINKPDFALPYWNWDHRDGMRIPEIFKEMDSPLFDPNRNTNHLDKMMNLSFVSDEEGSDVNEDDQYEENILLMRKAMVYPSVSDDPNKAELFLGSPYRAGDKMEGDVSGAGILERMPHNSVHVWTRSNTIKGNQDMGAFWSAGRDPLFYCHHSNVDRMWSLWTDVLHGGNFPKTPEYDDYRNAYFYFYDENANPVRVYVRDSFDTERLGYKYEDQELPWMSITQQQQQQQRQQQRQPLLGGRLKTRTFSLVKKVLTELKVMLPLPLKYSVIKTKVDRPKKSRTKEDKLEHEEVLVINFKLGKSKDFIKFDVYINDGTDYKPEDKTKINLEYAGSFTSLTHGGGGGGGDMSHMAEEDMGKNTVLKLALNQLLEDLDATDDDSIQVTIVPKSGTDSIVITGIDIE.

The N-terminal 101 residues, 1–101 (MATLSSPTII…EGANYYNTLA (101 aa)), are a transit peptide targeting the chloroplast. The tract at residues 35–58 (GVRSVNGKVSCQTKNNNGNDENNQ) is disordered. 2 disulfide bridges follow: Cys-111-Cys-127 and Cys-126-Cys-194. Cu cation contacts are provided by His-193, His-214, His-223, His-354, His-358, and His-388. A cross-link (2'-(S-cysteinyl)-histidine (Cys-His)) is located at residues 197–214 (CDGSYPVLGHNDTRLEVH).

The protein belongs to the tyrosinase family. Cu(2+) is required as a cofactor.

The protein resides in the plastid. The protein localises to the chloroplast thylakoid lumen. The catalysed reaction is 2 catechol + O2 = 2 1,2-benzoquinone + 2 H2O. Catalyzes the oxidation of mono- and o-diphenols to o-diquinones. This Spinacia oleracea (Spinach) protein is Polyphenol oxidase, chloroplastic.